A 488-amino-acid chain; its full sequence is MTASSVHSPVRQNRTGLGMRRIRHIHFVGIGGAGMCGIAEVLANQGYIVSGSDLRESAVTRHLRDCDIRVYIGHVDEHAHGADVLVVSTAVDLENPEIRWAREHRIPVVRRAEMLAELMRFRHGIAVAGTHGKTTTTSLTSTLLAEGGLDPTFVIGGKLTSAGTNARLGEGDYLVAEADESDASFLHLQPMVSIVTNIDADHMATYAGDFARLKDTFLEFLHNLPFYGLAVLCLDDDNVRGLLPRVQRQFVTYGFAEDADYRLRDFVQRGGEVQFTAERPPGMAPLEIRLGMPGRHNALNALAAIAVASDAGVDDAAIQQGLLHFAGVGRRFQVHGHYPAPGGEGDVMLVDDYGHHPREVEMVIDAVRAGWPERRLVMLYQPHRYSRTRDLYEDFVRVLSGVDTLLLLDVYSAGESSIPGAEGRTLAGSIRQRGQVDPIFVESKQELPALLSRVLRPDDILITQGAGDIGGISLRLAAGQLDLNGMEL.

129–135 (GTHGKTT) contributes to the ATP binding site.

The protein belongs to the MurCDEF family.

It is found in the cytoplasm. The enzyme catalyses UDP-N-acetyl-alpha-D-muramate + L-alanine + ATP = UDP-N-acetyl-alpha-D-muramoyl-L-alanine + ADP + phosphate + H(+). Its pathway is cell wall biogenesis; peptidoglycan biosynthesis. Functionally, cell wall formation. The polypeptide is UDP-N-acetylmuramate--L-alanine ligase (Chromohalobacter salexigens (strain ATCC BAA-138 / DSM 3043 / CIP 106854 / NCIMB 13768 / 1H11)).